Reading from the N-terminus, the 207-residue chain is Proteasome subunit beta 2 (207 aa).

A propeptide spans 1–13 (METNNKLKILKTG) (removed in mature form; by autocatalysis). Residue Thr-14 is the Nucleophile of the active site.

This sequence belongs to the peptidase T1B family. As to quaternary structure, the 20S proteasome core is composed of 14 alpha and 14 beta subunits that assemble into four stacked heptameric rings, resulting in a barrel-shaped structure. The two inner rings, each composed of seven catalytic beta subunits, are sandwiched by two outer rings, each composed of seven alpha subunits. The catalytic chamber with the active sites is on the inside of the barrel. Has a gated structure, the ends of the cylinder being occluded by the N-termini of the alpha-subunits. Is capped at one or both ends by the proteasome regulatory ATPase, PAN.

The protein resides in the cytoplasm. The catalysed reaction is Cleavage of peptide bonds with very broad specificity.. With respect to regulation, the formation of the proteasomal ATPase PAN-20S proteasome complex, via the docking of the C-termini of PAN into the intersubunit pockets in the alpha-rings, triggers opening of the gate for substrate entry. Interconversion between the open-gate and close-gate conformations leads to a dynamic regulation of the 20S proteasome proteolysis activity. Functionally, component of the proteasome core, a large protease complex with broad specificity involved in protein degradation. The chain is Proteasome subunit beta 2 from Sulfurisphaera tokodaii (strain DSM 16993 / JCM 10545 / NBRC 100140 / 7) (Sulfolobus tokodaii).